Here is a 361-residue protein sequence, read N- to C-terminus: Deoxyribonuclease-2-beta (361 aa).

Residues 1 to 27 (MKQKMMARLLRTSFALLFLGLFGVLGA) form the signal peptide. N-linked (GlcNAc...) asparagine glycosylation is found at asparagine 81, asparagine 103, asparagine 119, and asparagine 278.

The protein belongs to the DNase II family. In terms of tissue distribution, highly expressed in the eye lens and in salivary gland. Detected at lower levels in lung, prostate and lymph node. Isoform 2 is lung specific.

It is found in the lysosome. It carries out the reaction Endonucleolytic cleavage to nucleoside 3'-phosphates and 3'-phosphooligonucleotide end-products.. In terms of biological role, hydrolyzes DNA under acidic conditions. Does not require divalent cations for activity. Participates in the degradation of nuclear DNA during lens cell differentiation. This chain is Deoxyribonuclease-2-beta (DNASE2B), found in Homo sapiens (Human).